The primary structure comprises 921 residues: Protein translocase subunit SecA (921 aa).

ATP is bound by residues glutamine 87, 105–109 (GEGKT), and aspartate 515. A disordered region spans residues 872 to 901 (DMEVAGSTGDRGAALDIQPAPVRSGPKIGR). Zn(2+) contacts are provided by cysteine 905, cysteine 907, cysteine 916, and cysteine 917.

Belongs to the SecA family. Monomer and homodimer. Part of the essential Sec protein translocation apparatus which comprises SecA, SecYEG and auxiliary proteins SecDF-YajC and YidC. The cofactor is Zn(2+).

Its subcellular location is the cell inner membrane. The protein localises to the cytoplasm. It carries out the reaction ATP + H2O + cellular proteinSide 1 = ADP + phosphate + cellular proteinSide 2.. Its function is as follows. Part of the Sec protein translocase complex. Interacts with the SecYEG preprotein conducting channel. Has a central role in coupling the hydrolysis of ATP to the transfer of proteins into and across the cell membrane, serving both as a receptor for the preprotein-SecB complex and as an ATP-driven molecular motor driving the stepwise translocation of polypeptide chains across the membrane. This chain is Protein translocase subunit SecA, found in Polynucleobacter asymbioticus (strain DSM 18221 / CIP 109841 / QLW-P1DMWA-1) (Polynucleobacter necessarius subsp. asymbioticus).